A 347-amino-acid chain; its full sequence is S-adenosylmethionine:tRNA ribosyltransferase-isomerase (347 aa).

This sequence belongs to the QueA family. Monomer.

It localises to the cytoplasm. The enzyme catalyses 7-aminomethyl-7-carbaguanosine(34) in tRNA + S-adenosyl-L-methionine = epoxyqueuosine(34) in tRNA + adenine + L-methionine + 2 H(+). It participates in tRNA modification; tRNA-queuosine biosynthesis. In terms of biological role, transfers and isomerizes the ribose moiety from AdoMet to the 7-aminomethyl group of 7-deazaguanine (preQ1-tRNA) to give epoxyqueuosine (oQ-tRNA). In Pseudomonas paraeruginosa (strain DSM 24068 / PA7) (Pseudomonas aeruginosa (strain PA7)), this protein is S-adenosylmethionine:tRNA ribosyltransferase-isomerase.